The following is a 1611-amino-acid chain: MSSSSADVLKISILGNESIHVGFHLLPYIFKTITTTLPSSTYVLITDTNLSAIYLNDFKASFEEAASEADNKARFLVYEVAPGEGAKSRKVKGEIEDWMLDNKCTRDTVILAFGGGVIGDLTGFVAATFMRGVKFVQIPTTLLAMVDSSVGGKTAIDTPHGKNLIGAFWQPSYIFVDLAFLTTLPTREVSNGMAEVIKTAAIWKDDDFALLESRSAEISLAASSRPTGVPTAGRFVSDRSHAQSLLLQVVSGSIYVKAHIVTIDERETGLRNLVNFGHTIGHAIEAVLTPAMLHGECVSVGIVLEAEVARQLGILSQVAVGRLTRCLQAYGLPVSLSDRRITALPASSQLSVDRLLDIMKIDKKNSGPAKKIVLLSRIGKTYEEKASVVADDVISKVLCEAVTVKAATPTKSPITMATPGSKSISNRALVLAALGKGTCRVRNLLHSDDTAVMMNALVELKGAVFSWEDGGDTIVVEGGGGILSTPAKGKELYLGNAGTASRFLTTVCAMVSGSASSERSTVITGNARMKQRPIGPLVDALTANGAKVKYLESTGCLPLDIDTDGFRGGHIQLAASVSSQYVSSILLCAPYAAEQVTLELTGGQVISQPYIDMTIAMMKQFGATVERQKDEQGNLLDIYVIPKCTYVNPPEYSVESDASSATYPLAIAAITGTTCTISNIGSSSLQGDARFAKEILEPMGCIVEQTLTSTKVTGPPVGTLRALGNVDMEPMTDAFLTASVLAAVAVKPCLPERKVEGLPETASRIYGIANQRVKECNRIQAMRDQLAKFGIETDEFDDGIIIFGKPEASLFRGASIHCYDDHRVAMAFAVLSCIIDETIIEEKRCVEKTWPNFWDDLQNKIGVAVEGVELETHNQASTSAKPVSPIDQSQSDRPIFLIGMRGAGKTYVGRMAADILSGQFTDADDVFAQESHQTVSEFVAANGWDEFRKKETEILSKFVEEHRGNHVIALGGGIVETETARETLKAHVAKGGHVVHVTRALEDIEAYLDSIGNTAVRPNWGETFADVFKRREPWYQACSSHEFYNVLEAVGGQTHEEHTKAMRAECGRFFKFITGRESNRPRLSVGNPTSFLSLTFPDVTPALIHLDELTEGADAVEFRVDLLSTTGQAPTRPALPPISFVAKQLASLRLATTLPIVFSVRSKDQGGMVPSDNAEAYGALVRLGLRCACEYVDLEVCWPEQLLDSIVQLKRETHIIASWHDWTGDMAWDGEEMKAKHVLCEKYGDVAKIVGTAKSGLDNAKLAIFVGEVQSHPGAKPLLAINMGAAGQLSRILNPILTPVTHDALPSRAAPGQLTAREILQARALTGSLPAKKFVLFGSPIAHSVSPLLHNAGFATLGLPHTYRLHESEKVDQGVLEVIRSPDFGGASVTIPLKLDIIPHLDSVSEDAKIIGAVNTVIPRGGKLHGENTDWQAIHQAAAQNLDADALSYGSSTALVIGAGGTCRAAIYAMHKLRFKTIYLFNRTPENAAKVKASFPESYNIAVVTSLSSLPEAPVVVVSTVPGNSLTLDTFSQGIYLPSEVLSRPKGVAIDLAYKPHMTALLHAAEKKEGWKVVPGVEILCLQGFKQFEEWTGKRAPQKKMRKAVLDKYFA.

A 3-dehydroquinate synthase region spans residues 1-391 (MSSSSADVLK…YEEKASVVAD (391 aa)). NAD(+) is bound by residues 47-49 (DTN), 84-87 (EGAK), 115-117 (GGV), and D120. R131 lines the 7-phospho-2-dehydro-3-deoxy-D-arabino-heptonate pocket. Position 140 to 141 (140 to 141 (TT)) interacts with NAD(+). 7-phospho-2-dehydro-3-deoxy-D-arabino-heptonate contacts are provided by D147 and K153. K162 provides a ligand contact to NAD(+). 7-phospho-2-dehydro-3-deoxy-D-arabino-heptonate is bound at residue N163. NAD(+) is bound by residues 180–183 (FLTT) and N191. Residue E195 participates in Zn(2+) binding. 7-phospho-2-dehydro-3-deoxy-D-arabino-heptonate is bound by residues 195 to 198 (EVIK) and K257. The active-site Proton acceptor; for 3-dehydroquinate synthase activity is the E267. 7-phospho-2-dehydro-3-deoxy-D-arabino-heptonate is bound by residues 271 to 275 (RNLVN) and H278. H278 lines the Zn(2+) pocket. H282 serves as the catalytic Proton acceptor; for 3-dehydroquinate synthase activity. H294 and K363 together coordinate 7-phospho-2-dehydro-3-deoxy-D-arabino-heptonate. H294 lines the Zn(2+) pocket. The tract at residues 404 to 863 (VKAATPTKSP…WDDLQNKIGV (460 aa)) is EPSP synthase. Residue C845 is the For EPSP synthase activity of the active site. The shikimate kinase stretch occupies residues 892 to 1093 (DRPIFLIGMR…SVGNPTSFLS (202 aa)). 899-906 (GMRGAGKT) serves as a coordination point for ATP. Positions 1094–1318 (LTFPDVTPAL…AAPGQLTARE (225 aa)) are 3-dehydroquinase. H1220 acts as the Proton acceptor; for 3-dehydroquinate dehydratase activity in catalysis. Catalysis depends on K1248, which acts as the Schiff-base intermediate with substrate; for 3-dehydroquinate dehydratase activity. Residues 1331-1611 (AKKFVLFGSP…RKAVLDKYFA (281 aa)) are shikimate dehydrogenase.

The protein in the N-terminal section; belongs to the sugar phosphate cyclases superfamily. Dehydroquinate synthase family. This sequence in the 2nd section; belongs to the EPSP synthase family. It in the 3rd section; belongs to the shikimate kinase family. In the 4th section; belongs to the type-I 3-dehydroquinase family. The protein in the C-terminal section; belongs to the shikimate dehydrogenase family. Homodimer. Requires Zn(2+) as cofactor.

It is found in the cytoplasm. The catalysed reaction is 7-phospho-2-dehydro-3-deoxy-D-arabino-heptonate = 3-dehydroquinate + phosphate. It carries out the reaction 3-dehydroquinate = 3-dehydroshikimate + H2O. The enzyme catalyses shikimate + NADP(+) = 3-dehydroshikimate + NADPH + H(+). It catalyses the reaction shikimate + ATP = 3-phosphoshikimate + ADP + H(+). The catalysed reaction is 3-phosphoshikimate + phosphoenolpyruvate = 5-O-(1-carboxyvinyl)-3-phosphoshikimate + phosphate. It participates in metabolic intermediate biosynthesis; chorismate biosynthesis; chorismate from D-erythrose 4-phosphate and phosphoenolpyruvate: step 2/7. Its pathway is metabolic intermediate biosynthesis; chorismate biosynthesis; chorismate from D-erythrose 4-phosphate and phosphoenolpyruvate: step 3/7. The protein operates within metabolic intermediate biosynthesis; chorismate biosynthesis; chorismate from D-erythrose 4-phosphate and phosphoenolpyruvate: step 4/7. It functions in the pathway metabolic intermediate biosynthesis; chorismate biosynthesis; chorismate from D-erythrose 4-phosphate and phosphoenolpyruvate: step 5/7. It participates in metabolic intermediate biosynthesis; chorismate biosynthesis; chorismate from D-erythrose 4-phosphate and phosphoenolpyruvate: step 6/7. In terms of biological role, the AROM polypeptide catalyzes 5 consecutive enzymatic reactions in prechorismate polyaromatic amino acid biosynthesis. The chain is Pentafunctional AROM polypeptide from Cryptococcus neoformans var. neoformans serotype D (strain B-3501A) (Filobasidiella neoformans).